The following is a 341-amino-acid chain: MKALSKLKAEKGIWLVDAPKPVMGHNDLLIKIKKTAICGTDMHIYNWDEWSQKTIPVPMVVGHEYVGEVVDIGQEVRGFKIGDRVSGEGHITCGHCRNCRAGRTHLCRNTSGVGVNREGSFAEYLVIPAFNAFKIPDDISDDLASIFDPFGNAVHTALSFDLVGEDVLITGAGPIGIMAAAVCRHVGARHVVITDVNEYRLELARKMGATRAVNVSKESLKDVMKELGMTEGFDVGLEMSGVPSAFHAMLDTMNHGGKVAMLGIPGGEMAIDWSKVIFKGLVIKGIYGREMFETWYKMASLIQSGLDISPIITHHFKIDDFQQGFDAMGSGQSGKVILSWD.

Position 38 (C38) interacts with Zn(2+). Active-site charge relay system residues include T40 and H43. Positions 63, 64, 93, 96, 99, and 107 each coordinate Zn(2+). NAD(+) contacts are provided by residues I175, D195, R200, 262 to 264 (LGI), and 286 to 287 (IY).

The protein belongs to the zinc-containing alcohol dehydrogenase family. In terms of assembly, homotetramer. Requires Zn(2+) as cofactor.

It localises to the cytoplasm. The enzyme catalyses L-threonine + NAD(+) = (2S)-2-amino-3-oxobutanoate + NADH + H(+). Its pathway is amino-acid degradation; L-threonine degradation via oxydo-reductase pathway; glycine from L-threonine: step 1/2. In terms of biological role, catalyzes the NAD(+)-dependent oxidation of L-threonine to 2-amino-3-ketobutyrate. The protein is L-threonine 3-dehydrogenase of Shewanella baltica (strain OS223).